A 209-amino-acid polypeptide reads, in one-letter code: Large ribosomal subunit protein uL3 (209 aa).

The disordered stretch occupies residues 132 to 153 (ATHGNSLSHRVPGSIGQNQTPG). Gln150 is modified (N5-methylglutamine).

Belongs to the universal ribosomal protein uL3 family. In terms of assembly, part of the 50S ribosomal subunit. Forms a cluster with proteins L14 and L19. Post-translationally, methylated by PrmB.

In terms of biological role, one of the primary rRNA binding proteins, it binds directly near the 3'-end of the 23S rRNA, where it nucleates assembly of the 50S subunit. The protein is Large ribosomal subunit protein uL3 of Erwinia tasmaniensis (strain DSM 17950 / CFBP 7177 / CIP 109463 / NCPPB 4357 / Et1/99).